Here is a 144-residue protein sequence, read N- to C-terminus: D-aminoacyl-tRNA deacylase (144 aa).

The Gly-cisPro motif, important for rejection of L-amino acids signature appears at 136–137; sequence GP.

This sequence belongs to the DTD family. Homodimer.

It localises to the cytoplasm. The enzyme catalyses glycyl-tRNA(Ala) + H2O = tRNA(Ala) + glycine + H(+). It catalyses the reaction a D-aminoacyl-tRNA + H2O = a tRNA + a D-alpha-amino acid + H(+). An aminoacyl-tRNA editing enzyme that deacylates mischarged D-aminoacyl-tRNAs. Also deacylates mischarged glycyl-tRNA(Ala), protecting cells against glycine mischarging by AlaRS. Acts via tRNA-based rather than protein-based catalysis; rejects L-amino acids rather than detecting D-amino acids in the active site. By recycling D-aminoacyl-tRNA to D-amino acids and free tRNA molecules, this enzyme counteracts the toxicity associated with the formation of D-aminoacyl-tRNA entities in vivo and helps enforce protein L-homochirality. The protein is D-aminoacyl-tRNA deacylase of Mannheimia succiniciproducens (strain KCTC 0769BP / MBEL55E).